Reading from the N-terminus, the 123-residue chain is Thioredoxin domain-containing protein 17 (123 aa).

Position 2 is an N-acetylalanine (Ala2). One can recognise a Thioredoxin domain in the interval 41–123 (SWCPDCVEAE…SLVEMIFSED (83 aa)). Residues Cys43 and Cys46 each act as nucleophile in the active site. Cysteines 43 and 46 form a disulfide.

Belongs to the thioredoxin family. As to quaternary structure, interacts with TRXR1 and DYNLL1/DNCL1. The oxidized protein is reduced by TRXR1.

The protein resides in the cytoplasm. Its function is as follows. Disulfide reductase. May participate in various redox reactions through the reversible oxidation of its active center dithiol to a disulfide and catalyze dithiol-disulfide exchange reactions. Modulates TNF-alpha signaling and NF-kappa-B activation. Has peroxidase activity and may contribute to the elimination of cellular hydrogen peroxide. This chain is Thioredoxin domain-containing protein 17 (Txndc17), found in Mus musculus (Mouse).